The primary structure comprises 1029 residues: Kinesin-like protein KIF17 (1029 aa).

The Kinesin motor domain maps to 5-335 (AVKVVVRCRP…LRYANRAKNI (331 aa)). 91 to 98 (GQTGSGKS) lines the ATP pocket. A coiled-coil region spans residues 346–462 (KDALLREYQE…EENLRKETEA (117 aa)). Disordered stretches follow at residues 523–569 (ELPK…MPTE) and 647–673 (VPAPTDLLEPSDARPEAEAADDFPPRP). Positions 532 to 551 (SEISLGSSESSSLEETSVSE) are enriched in low complexity. Basic and acidic residues predominate over residues 657-673 (SDARPEAEAADDFPPRP). Residues 739–846 (QQVLARLQLL…QLEKIDYLAT (108 aa)) are a coiled coil. 2 disordered regions span residues 908-931 (AVSTGPQNKPARKTSAADNGEPNM) and 968-1029 (KSLT…SEPL).

This sequence belongs to the TRAFAC class myosin-kinesin ATPase superfamily. Kinesin family. As to quaternary structure, homodimer. Interacts with APBA1 (via PDZ domain); the interaction is direct and is required for association of KIF17 with the cargo that is to be transported. Interacts with IFT B complex components IFT52 and IFT57. Interacts with IFT70B. Interacts with PIWIL1. Interacts with TBATA.

Its subcellular location is the cytoplasm. The protein resides in the cytoskeleton. It localises to the cell projection. The protein localises to the cilium. It is found in the dendrite. In terms of biological role, dendrite-specific motor protein which, in association with the Apba1-containing complex (LIN-10-LIN-2-LIN-7 complex), transports vesicles containing N-methyl-D-aspartate (NMDA) receptor subunit NR2B along microtubules. In Homo sapiens (Human), this protein is Kinesin-like protein KIF17 (KIF17).